Consider the following 192-residue polypeptide: Pyridoxal 5'-phosphate synthase subunit PdxT (192 aa).

An L-glutamine-binding site is contributed by 46 to 48; it reads GES. The active-site Nucleophile is Cys75. L-glutamine contacts are provided by residues Arg101 and 129 to 130; that span reads IR. Catalysis depends on charge relay system residues His166 and Glu168.

It belongs to the glutaminase PdxT/SNO family. In the presence of PdxS, forms a dodecamer of heterodimers. Only shows activity in the heterodimer.

It catalyses the reaction aldehydo-D-ribose 5-phosphate + D-glyceraldehyde 3-phosphate + L-glutamine = pyridoxal 5'-phosphate + L-glutamate + phosphate + 3 H2O + H(+). It carries out the reaction L-glutamine + H2O = L-glutamate + NH4(+). It participates in cofactor biosynthesis; pyridoxal 5'-phosphate biosynthesis. In terms of biological role, catalyzes the hydrolysis of glutamine to glutamate and ammonia as part of the biosynthesis of pyridoxal 5'-phosphate. The resulting ammonia molecule is channeled to the active site of PdxS. In Staphylococcus carnosus (strain TM300), this protein is Pyridoxal 5'-phosphate synthase subunit PdxT.